A 69-amino-acid chain; its full sequence is DNA gyrase inhibitor YacG (69 aa).

The segment at 1–28 is disordered; the sequence is MSGEGKKHGSNVEPLRPTRPCPECGRPS. 4 residues coordinate Zn(2+): Cys21, Cys24, Cys36, and Cys40.

It belongs to the DNA gyrase inhibitor YacG family. In terms of assembly, interacts with GyrB. The cofactor is Zn(2+).

Its function is as follows. Inhibits all the catalytic activities of DNA gyrase by preventing its interaction with DNA. Acts by binding directly to the C-terminal domain of GyrB, which probably disrupts DNA binding by the gyrase. The chain is DNA gyrase inhibitor YacG from Sinorhizobium fredii (strain NBRC 101917 / NGR234).